Here is a 553-residue protein sequence, read N- to C-terminus: Zinc finger protein with KRAB and SCAN domains 3 (553 aa).

The tract at residues 28 to 49 (EQEESSPLAEETSWLGSPGPDR) is disordered. A phosphoserine mark is found at Ser-33 and Ser-44. One can recognise an SCAN box domain in the interval 51-133 (RQRFRAFRYP…ALLEYLDRQL (83 aa)). A Phosphothreonine modification is found at Thr-136. Lys-176 participates in a covalent cross-link: Glycyl lysine isopeptide (Lys-Gly) (interchain with G-Cter in SUMO2). A Phosphothreonine modification is found at Thr-206. Residues 213–273 (LKMEDVAPVL…RAEEYRDQKP (61 aa)) enclose the KRAB domain. At Ser-223 the chain carries Phosphoserine. 5 consecutive C2H2-type zinc fingers follow at residues 313-335 (FYCR…KRIH), 341-363 (YECE…QRVH), 369-391 (YECE…QRTH), 397-419 (YECD…HRIH), and 425-447 (YQCN…QRTH). Position 448 is a phosphothreonine (Thr-448). 2 consecutive C2H2-type zinc fingers follow at residues 479–501 (YQCN…QKVH) and 507–529 (FECQ…QRRH).

This sequence belongs to the krueppel C2H2-type zinc-finger protein family. As to expression, expressed in heart, brain, spleen, lung, liver, skeletal muscle, kidney and testis.

The protein localises to the nucleus. It is found in the cytoplasm. In terms of biological role, transcriptional factor that binds to the consensus sequence 5'-[GT][AG][AGT]GGGG-3' and acts as a repressor of autophagy. Specifically represses expression of genes involved in autophagy and lysosome biogenesis/function such as MAP1LC3B, ULK1 or WIPI2. Associates with chromatin at the ITGB4 and VEGF promoters. This Mus musculus (Mouse) protein is Zinc finger protein with KRAB and SCAN domains 3 (Zkscan3).